The chain runs to 173 residues: Transcription factor HES-2 (173 aa).

The bHLH domain occupies 13–70 (LRKSLKPLLEKRRRARINQSLSQLKGLILPLLGRENSNCSKLEKADVLEMTVRFLQEL). An Orange domain is found at 86-119 (YREGYSACVARLARVLPACRVLEPAVSARLLEHL). The segment at 128–173 (LDGGRAGDSSGPSAPAPAPASAPEPASAPVPSPPSPPCGPGLWRPW) is disordered. Residues 141–166 (APAPAPASAPEPASAPVPSPPSPPCG) show a composition bias toward pro residues. Positions 170–173 (WRPW) match the WRPW motif motif.

Transcription repression requires formation of a complex with a corepressor protein of the Groucho/TLE family. Expressed in placenta, pancreatic cancer, colon cancer with RER, cervical cancer, and in head and neck tumors.

Its subcellular location is the nucleus. In terms of biological role, transcriptional repressor of genes that require a bHLH protein for their transcription. In Homo sapiens (Human), this protein is Transcription factor HES-2 (HES2).